A 287-amino-acid chain; its full sequence is Chlorophyll a-b binding protein CP29.2, chloroplastic (287 aa).

A chloroplast-targeting transit peptide spans Met-1 to Ala-31. Arg-32 bears the N2-acetylarginine mark. Thr-37 is modified (phosphothreonine). Chlorophyll b is bound at residue Trp-55. Residue Phe-75 coordinates chlorophyll a. Thr-109 and Thr-111 each carry phosphothreonine. Positions 137 and 140 each coordinate chlorophyll a. The chain crosses the membrane as a helical span at residues Trp-143–Gln-163. Leu-177 lines the chlorophyll a pocket. The chain crosses the membrane as a helical span at residues Leu-181 to Phe-201. The chlorophyll b site is built by Glu-200 and Arg-203. 5 residues coordinate chlorophyll a: Glu-239, His-242, Arg-244, Gln-256, and His-271. The helical transmembrane segment at Leu-245–Leu-265 threads the bilayer.

This sequence belongs to the light-harvesting chlorophyll a/b-binding (LHC) protein family. As to quaternary structure, the LHC complex consists of chlorophyll a-b binding proteins. The cofactor is Binds at least 14 chlorophylls (8 Chl-a and 6 Chl-b) and carotenoids such as lutein and neoxanthin.. Post-translationally, photoregulated by reversible phosphorylation of its threonine residues.

Its subcellular location is the plastid. The protein resides in the chloroplast thylakoid membrane. In terms of biological role, the light-harvesting complex (LHC) functions as a light receptor, it captures and delivers excitation energy to photosystems with which it is closely associated. The sequence is that of Chlorophyll a-b binding protein CP29.2, chloroplastic (LHCB4.2) from Arabidopsis thaliana (Mouse-ear cress).